Reading from the N-terminus, the 583-residue chain is Leucine-rich repeat-containing protein 47 (583 aa).

An N-acetylalanine modification is found at Ala2. 7 LRR repeats span residues Gln76–Leu95, Ala100–Gly121, Gln130–Ala152, Arg154–Pro175, Leu180–Ala202, Ser203–Pro225, and Lys226–Val246. The tract at residues Val260–Asp300 is disordered. Basic and acidic residues predominate over residues Gly270 to Arg281. Phosphoserine is present on residues Ser315 and Ser431. Residues Leu402 to Arg437 are a coiled coil. Tyr509 bears the Phosphotyrosine mark. Positions Asn513–Gly544 are disordered. 2 positions are modified to phosphoserine: Ser518 and Ser520.

In Homo sapiens (Human), this protein is Leucine-rich repeat-containing protein 47 (LRRC47).